The sequence spans 530 residues: Cation transporter HKT2;1 (530 aa).

Residues 1-40 (MTSIYHDFIHNKLQSFGRIGRYFVNFVVLAHRFIALHIHP) are Cytoplasmic-facing. The next 2 membrane-spanning stretches (helical) occupy residues 41–61 (FWIQ…LLMF) and 102–122 (IVVI…FLGL). The Cytoplasmic segment spans residues 123 to 186 (MLRLNHKHNP…DLKRSKRLRW (64 aa)). 2 consecutive transmembrane segments (helical) span residues 187 to 207 (FLGF…FLLV) and 260 to 280 (GLLL…PLFL). Residues 281–317 (RLLIWFLGKVTKLRELKLMIKNPEELQYDYLLPKLPT) lie on the Cytoplasmic side of the membrane. The next 2 helical transmembrane spans lie at 318-338 (AFLA…FGAV) and 372-392 (IDCS…MYLP). The Cytoplasmic portion of the chain corresponds to 393 to 418 (PSTTFALSNGDEKTANKKAKRKLGLV). Helical transmembrane passes span 419-439 (VQNL…VAFI) and 494-514 (SLSG…MLYG). Residues 515–530 (RLKAFTKGTGEYWRLW) lie on the Cytoplasmic side of the membrane.

The protein belongs to the TrkH potassium transport family. HKT (TC 2.A.38.3) subfamily. In terms of tissue distribution, expressed in epidermis and vascular tissue of endodermis in roots, and in cells surrounding the vasculature in leaves.

Its subcellular location is the membrane. The catalysed reaction is Na(+)(in) = Na(+)(out). Seems to be involved in regulation of potassium-sodium homeostasis. Seems to act as a high-affinity sodium transporter, which mediates increased sodium uptake in roots under potassium deficiency and contributes to sodium accumulation and salt toxicity. Involved in nutritional sodium uptake and distribution in potassium-starved roots to allow plant growth. May also act as a potassium transporter. Functions as a sodium-potassium cotransporter. The polypeptide is Cation transporter HKT2;1 (Oryza sativa subsp. indica (Rice)).